Reading from the N-terminus, the 394-residue chain is p-hydroxybenzoate hydroxylase (394 aa).

FAD is bound by residues serine 13, glutamate 32, 42–47 (RIRAGV), and glutamine 102. Residues tyrosine 201, 212–214 (SQR), and tyrosine 222 each bind substrate. Aspartate 286 lines the FAD pocket. Position 293 (proline 293) interacts with substrate. 299–300 (LN) provides a ligand contact to FAD.

Belongs to the aromatic-ring hydroxylase family. Homodimer. Requires FAD as cofactor.

It catalyses the reaction 4-hydroxybenzoate + NADPH + O2 + H(+) = 3,4-dihydroxybenzoate + NADP(+) + H2O. The protein operates within aromatic compound metabolism; benzoate degradation via hydroxylation; 3,4-dihydroxybenzoate from benzoate: step 2/2. Catalyzes the incorporation of an atom of dioxygen into p-hydroxybenzoate (p-OHB) to form 3,4-dihydroxybenzoate (3,4DOHB). The reaction occurs in two parts: reduction of the flavin adenine dinucleotide (FAD) in the enzyme by reduced nicotinamide adenine dinucleotide phosphate (NADPH) in response to binding p-hydroxybenzoate to the enzyme and oxidation of reduced FAD with oxygen to form a hydroperoxide, which then oxygenates p-hydroxybenzoate. The polypeptide is p-hydroxybenzoate hydroxylase (pobA) (Pseudomonas fluorescens).